Consider the following 117-residue polypeptide: Ribosome-binding factor A (117 aa).

This sequence belongs to the RbfA family. Monomer. Binds 30S ribosomal subunits, but not 50S ribosomal subunits or 70S ribosomes.

The protein resides in the cytoplasm. One of several proteins that assist in the late maturation steps of the functional core of the 30S ribosomal subunit. Associates with free 30S ribosomal subunits (but not with 30S subunits that are part of 70S ribosomes or polysomes). Required for efficient processing of 16S rRNA. May interact with the 5'-terminal helix region of 16S rRNA. This chain is Ribosome-binding factor A, found in Nitrosomonas europaea (strain ATCC 19718 / CIP 103999 / KCTC 2705 / NBRC 14298).